The sequence spans 573 residues: Putative adenine deaminase PTO1085 (573 aa).

It belongs to the metallo-dependent hydrolases superfamily. Adenine deaminase family.

It catalyses the reaction adenine + H2O + H(+) = hypoxanthine + NH4(+). The polypeptide is Putative adenine deaminase PTO1085 (Picrophilus torridus (strain ATCC 700027 / DSM 9790 / JCM 10055 / NBRC 100828 / KAW 2/3)).